Reading from the N-terminus, the 813-residue chain is Leucine--tRNA ligase (813 aa).

Residues 42–52 carry the 'HIGH' region motif; that stretch reads PYTSGNLHIGH. A 'KMSKS' region motif is present at residues 580-584; the sequence is KMSKS. ATP is bound at residue Lys-583.

Belongs to the class-I aminoacyl-tRNA synthetase family.

The protein resides in the cytoplasm. The enzyme catalyses tRNA(Leu) + L-leucine + ATP = L-leucyl-tRNA(Leu) + AMP + diphosphate. The polypeptide is Leucine--tRNA ligase (Dehalococcoides mccartyi (strain CBDB1)).